A 196-amino-acid polypeptide reads, in one-letter code: ATP synthase subunit b (196 aa).

A helical transmembrane segment spans residues 24 to 44 (PLSELLIGTLSFALLVAFFFW).

This sequence belongs to the ATPase B chain family. F-type ATPases have 2 components, F(1) - the catalytic core - and F(0) - the membrane proton channel. F(1) has five subunits: alpha(3), beta(3), gamma(1), delta(1), epsilon(1). F(0) has three main subunits: a(1), b(2) and c(10-14). The alpha and beta chains form an alternating ring which encloses part of the gamma chain. F(1) is attached to F(0) by a central stalk formed by the gamma and epsilon chains, while a peripheral stalk is formed by the delta and b chains.

The protein resides in the cell membrane. F(1)F(0) ATP synthase produces ATP from ADP in the presence of a proton or sodium gradient. F-type ATPases consist of two structural domains, F(1) containing the extramembraneous catalytic core and F(0) containing the membrane proton channel, linked together by a central stalk and a peripheral stalk. During catalysis, ATP synthesis in the catalytic domain of F(1) is coupled via a rotary mechanism of the central stalk subunits to proton translocation. Its function is as follows. Component of the F(0) channel, it forms part of the peripheral stalk, linking F(1) to F(0). The sequence is that of ATP synthase subunit b from Frankia casuarinae (strain DSM 45818 / CECT 9043 / HFP020203 / CcI3).